A 111-amino-acid chain; its full sequence is Iron-sulfur cluster insertion protein ErpA (111 aa).

Cysteine 39, cysteine 103, and cysteine 105 together coordinate iron-sulfur cluster.

Belongs to the HesB/IscA family. Homodimer. The cofactor is iron-sulfur cluster.

In terms of biological role, required for insertion of 4Fe-4S clusters for at least IspG. In Buchnera aphidicola subsp. Cinara cedri (strain Cc), this protein is Iron-sulfur cluster insertion protein ErpA.